Reading from the N-terminus, the 454-residue chain is Mediator of RNA polymerase II transcription subunit 1 (454 aa).

This sequence belongs to the Mediator complex subunit 1 family. Component of the Mediator complex.

Its subcellular location is the nucleus. Component of the Mediator complex, a coactivator involved in the regulated transcription of nearly all RNA polymerase II-dependent genes. Mediator functions as a bridge to convey information from gene-specific regulatory proteins to the basal RNA polymerase II transcription machinery. Mediator is recruited to promoters by direct interactions with regulatory proteins and serves as a scaffold for the assembly of a functional preinitiation complex with RNA polymerase II and the general transcription factors. This is Mediator of RNA polymerase II transcription subunit 1 (med1) from Schizosaccharomyces pombe (strain 972 / ATCC 24843) (Fission yeast).